A 1383-amino-acid chain; its full sequence is WD repeat-containing protein dyf-2 (1383 aa).

WD repeat units lie at residues 32-71, 72-112, 118-157, 160-198, and 337-376; these read EHGSGPIIHRWRPNGHTVAVACANNTVIYYDKKGNVIDAL, NPTG…TDTV, SSKELPTCLAWSPSTPTLVIGNNAGNIVVYNHRTSRRIAV, KHQRSVTQITVTPEDYVISCSDDNTLSVTTLEGTTVSTT, and ETEKNLSEIEVTEDGQLVAVSSQSGVLSIFVTKMPTLAAS. 7 TPR repeats span residues 756–789, 810–847, 885–918, 940–973, 996–1029, 1031–1053, and 1064–1097; these read EEKNLLHAQIYTILSRYDDAEQLYLESSRPMEAL, PKEIPYLSKEYAQELELTGDHANSLANYEKGVMENPQN, RVVKRDCAIILEQMKQYTEAAQLYEVGLFYDRAA, PKIHIQYGKIMEKEKKYKVAVKCYETGRDYDNQV, IEGAKLVAKFFVKLGDYNSAIQFLVMSQCVQEAF, LAEKNNAVREYAKAIEQHGNISQ, and VNDMFMAAKFYTQAGQYNNAINLLFKNGDDENCV.

Component of the IFT complex A (IFT-A) composed of at least che-11, daf-10, dyf-2, ift-139, ift-43 and ifta-1. In terms of tissue distribution, expressed in ciliated sensory neurons.

It localises to the cell projection. It is found in the cilium. Component of the IFT complex A (IFT-A), a complex required for retrograde ciliary transport. Moves along the ciliary axoneme and is involved in the assembly, localization and the movement of other intraflagellar transport (IFT) proteins along the cilia axoneme. May also associate with the BBSome complex in order to mediate ciliary transport. Regulates cilia biogenesis, morphology and sensitivity to environmental cues. This chain is WD repeat-containing protein dyf-2, found in Caenorhabditis elegans.